A 322-amino-acid chain; its full sequence is Probable heme-iron transport system permease protein IsdF (322 aa).

Helical transmembrane passes span leucine 9 to glycine 29, isoleucine 61 to alanine 81, alanine 89 to isoleucine 109, phenylalanine 114 to leucine 134, valine 143 to leucine 163, isoleucine 179 to leucine 199, valine 233 to valine 253, valine 267 to glycine 287, and leucine 294 to isoleucine 314.

Belongs to the binding-protein-dependent transport system permease family. FecCD subfamily.

The protein localises to the cell membrane. Its function is as follows. Part of the binding-protein-dependent transport system for heme-iron. Responsible for the translocation of the substrate across the membrane. In Staphylococcus aureus (strain bovine RF122 / ET3-1), this protein is Probable heme-iron transport system permease protein IsdF (isdF).